The sequence spans 190 residues: Endoribonuclease YbeY (190 aa).

The tract at residues 1 to 25 is disordered; the sequence is MSQPRPGHRPDCNGADPDSNFASMT. 3 residues coordinate Zn(2+): histidine 147, histidine 151, and histidine 157.

It belongs to the endoribonuclease YbeY family. Zn(2+) is required as a cofactor.

Its subcellular location is the cytoplasm. Functionally, single strand-specific metallo-endoribonuclease involved in late-stage 70S ribosome quality control and in maturation of the 3' terminus of the 16S rRNA. The protein is Endoribonuclease YbeY of Rhodopseudomonas palustris (strain ATCC BAA-98 / CGA009).